Reading from the N-terminus, the 181-residue chain is Regulator of G-protein signaling 10 (181 aa).

Positions 1-35 are disordered; the sequence is MFTRAVSRLSRKRPPSDIHDGDGSSSSGHQSLKST. Phosphoserine occurs at positions 24 and 41. The region spanning 41-156 is the RGS domain; it reads SLENLLEDPE…LKSDLFLKPK (116 aa). A lipid anchor (S-palmitoyl cysteine) is attached at C74. The segment at 155–181 is disordered; sequence PKRTEEEEEEPPDAQTAAKRASRIYNT. S176 bears the Phosphoserine mark.

As to quaternary structure, interacts with GNAZ, GNAI1 and GNAI3. Associates specifically with the activated, GTP-bound forms of GNAZ and GNAI3.

Its subcellular location is the cytoplasm. The protein localises to the cytosol. The protein resides in the nucleus. Its function is as follows. Regulates G protein-coupled receptor signaling cascades, including signaling downstream of the muscarinic acetylcholine receptor CHRM2. Inhibits signal transduction by increasing the GTPase activity of G protein alpha subunits, thereby driving them into their inactive GDP-bound form. Modulates the activity of potassium channels that are activated in response to CHRM2 signaling. Activity on GNAZ is inhibited by palmitoylation of the G-protein. The chain is Regulator of G-protein signaling 10 (Rgs10) from Mus musculus (Mouse).